The following is a 432-amino-acid chain: Gamma-glutamyl phosphate reductase (432 aa).

This sequence belongs to the gamma-glutamyl phosphate reductase family.

The protein resides in the cytoplasm. It catalyses the reaction L-glutamate 5-semialdehyde + phosphate + NADP(+) = L-glutamyl 5-phosphate + NADPH + H(+). The protein operates within amino-acid biosynthesis; L-proline biosynthesis; L-glutamate 5-semialdehyde from L-glutamate: step 2/2. Its function is as follows. Catalyzes the NADPH-dependent reduction of L-glutamate 5-phosphate into L-glutamate 5-semialdehyde and phosphate. The product spontaneously undergoes cyclization to form 1-pyrroline-5-carboxylate. This is Gamma-glutamyl phosphate reductase from Clavibacter michiganensis subsp. michiganensis (strain NCPPB 382).